Here is a 129-residue protein sequence, read N- to C-terminus: Cytochrome c oxidase subunit 5B, mitochondrial (129 aa).

Residues 1–31 (MASRLLRGAGTLAAQALRARGPSGAAAMRSM) constitute a mitochondrion transit peptide. K68 and K86 each carry N6-acetyllysine. Zn(2+) is bound by residues C91, C93, C113, and C116. The residue at position 121 (K121) is an N6-acetyllysine.

This sequence belongs to the cytochrome c oxidase subunit 5B family. As to quaternary structure, component of the cytochrome c oxidase (complex IV, CIV), a multisubunit enzyme composed of 14 subunits. The complex is composed of a catalytic core of 3 subunits MT-CO1, MT-CO2 and MT-CO3, encoded in the mitochondrial DNA, and 11 supernumerary subunits COX4I1 (or COX4I2), COX5A, COX5B, COX6A1 (or COX6A2), COX6B1 (or COX6B2), COX6C, COX7A2 (or COX7A1), COX7B, COX7C, COX8A and NDUFA4, which are encoded in the nuclear genome. The complex exists as a monomer or a dimer and forms supercomplexes (SCs) in the inner mitochondrial membrane with NADH-ubiquinone oxidoreductase (complex I, CI) and ubiquinol-cytochrome c oxidoreductase (cytochrome b-c1 complex, complex III, CIII), resulting in different assemblies (supercomplex SCI(1)III(2)IV(1) and megacomplex MCI(2)III(2)IV(2)).

Its subcellular location is the mitochondrion inner membrane. The protein operates within energy metabolism; oxidative phosphorylation. Component of the cytochrome c oxidase, the last enzyme in the mitochondrial electron transport chain which drives oxidative phosphorylation. The respiratory chain contains 3 multisubunit complexes succinate dehydrogenase (complex II, CII), ubiquinol-cytochrome c oxidoreductase (cytochrome b-c1 complex, complex III, CIII) and cytochrome c oxidase (complex IV, CIV), that cooperate to transfer electrons derived from NADH and succinate to molecular oxygen, creating an electrochemical gradient over the inner membrane that drives transmembrane transport and the ATP synthase. Cytochrome c oxidase is the component of the respiratory chain that catalyzes the reduction of oxygen to water. Electrons originating from reduced cytochrome c in the intermembrane space (IMS) are transferred via the dinuclear copper A center (CU(A)) of subunit 2 and heme A of subunit 1 to the active site in subunit 1, a binuclear center (BNC) formed by heme A3 and copper B (CU(B)). The BNC reduces molecular oxygen to 2 water molecules using 4 electrons from cytochrome c in the IMS and 4 protons from the mitochondrial matrix. The protein is Cytochrome c oxidase subunit 5B, mitochondrial (COX5B) of Homo sapiens (Human).